A 104-amino-acid polypeptide reads, in one-letter code: NADH-quinone oxidoreductase subunit K (104 aa).

3 helical membrane-spanning segments follow: residues 7–27, 33–53, and 67–87; these read LSHY…GIFL, IVIL…LVSF, and LLVL…LVVF.

The protein belongs to the complex I subunit 4L family. In terms of assembly, NDH-1 is composed of 14 different subunits. Subunits NuoA, H, J, K, L, M, N constitute the membrane sector of the complex.

It is found in the cell inner membrane. The catalysed reaction is a quinone + NADH + 5 H(+)(in) = a quinol + NAD(+) + 4 H(+)(out). NDH-1 shuttles electrons from NADH, via FMN and iron-sulfur (Fe-S) centers, to quinones in the respiratory chain. The immediate electron acceptor for the enzyme in this species is believed to be ubiquinone. Couples the redox reaction to proton translocation (for every two electrons transferred, four hydrogen ions are translocated across the cytoplasmic membrane), and thus conserves the redox energy in a proton gradient. The protein is NADH-quinone oxidoreductase subunit K of Xanthobacter autotrophicus (strain ATCC BAA-1158 / Py2).